The primary structure comprises 129 residues: Glycine cleavage system H protein (129 aa).

Residues 24–106 (IAVIGITAYA…YGDGWLIKVR (83 aa)) enclose the Lipoyl-binding domain. Position 65 is an N6-lipoyllysine (lysine 65).

This sequence belongs to the GcvH family. As to quaternary structure, the glycine cleavage system is composed of four proteins: P, T, L and H. (R)-lipoate is required as a cofactor.

In terms of biological role, the glycine cleavage system catalyzes the degradation of glycine. The H protein shuttles the methylamine group of glycine from the P protein to the T protein. This chain is Glycine cleavage system H protein, found in Synechococcus sp. (strain JA-3-3Ab) (Cyanobacteria bacterium Yellowstone A-Prime).